The primary structure comprises 357 residues: Peptide chain release factor 1 (357 aa).

Q232 is subject to N5-methylglutamine. Residues 284 to 304 (AERAAERKGQIGSGDRSERIR) show a composition bias toward basic and acidic residues. The tract at residues 284 to 308 (AERAAERKGQIGSGDRSERIRTYNY) is disordered.

It belongs to the prokaryotic/mitochondrial release factor family. Methylated by PrmC. Methylation increases the termination efficiency of RF1.

The protein localises to the cytoplasm. Its function is as follows. Peptide chain release factor 1 directs the termination of translation in response to the peptide chain termination codons UAG and UAA. The sequence is that of Peptide chain release factor 1 from Maricaulis maris (strain MCS10) (Caulobacter maris).